The following is a 335-amino-acid chain: Zinc finger protein 396 (335 aa).

The region spanning 52-134 (RQQFRQFGYQ…TMLEDVEREL (83 aa)) is the SCAN box domain. 3 consecutive C2H2-type zinc fingers follow at residues 251–273 (QKCD…QRIH), 279–301 (YACD…RRTH), and 307–329 (YKCH…RKRH).

Belongs to the krueppel C2H2-type zinc-finger protein family. Isoforms 1 and 2 can both homo- and hetero-associate. Expressed strongly in liver, moderately in skeletal muscle and weakly in kidney, pancreas, spleen and prostate.

The protein resides in the nucleus. The protein localises to the cytoplasm. Its function is as follows. Isoform 1 and isoform 2 act as DNA-dependent transcriptional repressors. The protein is Zinc finger protein 396 (ZNF396) of Homo sapiens (Human).